The sequence spans 129 residues: Small ribosomal subunit protein uS11 (129 aa).

It belongs to the universal ribosomal protein uS11 family. In terms of assembly, part of the 30S ribosomal subunit. Interacts with proteins S7 and S18. Binds to IF-3.

In terms of biological role, located on the platform of the 30S subunit, it bridges several disparate RNA helices of the 16S rRNA. Forms part of the Shine-Dalgarno cleft in the 70S ribosome. This chain is Small ribosomal subunit protein uS11, found in Glaesserella parasuis serovar 5 (strain SH0165) (Haemophilus parasuis).